The primary structure comprises 402 residues: Tol-Pal system protein TolB (402 aa).

Residues 1–17 (MKKIVAIFLVFLGSLWA) form the signal peptide.

The protein belongs to the TolB family. The Tol-Pal system is composed of five core proteins: the inner membrane proteins TolA, TolQ and TolR, the periplasmic protein TolB and the outer membrane protein Pal. They form a network linking the inner and outer membranes and the peptidoglycan layer.

The protein localises to the periplasm. Its function is as follows. Part of the Tol-Pal system, which plays a role in outer membrane invagination during cell division and is important for maintaining outer membrane integrity. The protein is Tol-Pal system protein TolB of Campylobacter jejuni (strain RM1221).